Here is a 219-residue protein sequence, read N- to C-terminus: Lipoprotein-releasing system ATP-binding protein LolD (219 aa).

The region spanning 3-219 (IEARNIRKSF…HMRDGLLFSE (217 aa)) is the ABC transporter domain. Residue 35–42 (GTSGAGKT) coordinates ATP.

The protein belongs to the ABC transporter superfamily. Lipoprotein translocase (TC 3.A.1.125) family. The complex is composed of two ATP-binding proteins (LolD) and two transmembrane proteins (LolC and LolE).

It is found in the cell inner membrane. In terms of biological role, part of the ABC transporter complex LolCDE involved in the translocation of mature outer membrane-directed lipoproteins, from the inner membrane to the periplasmic chaperone, LolA. Responsible for the formation of the LolA-lipoprotein complex in an ATP-dependent manner. In Porphyromonas gingivalis (strain ATCC BAA-308 / W83), this protein is Lipoprotein-releasing system ATP-binding protein LolD.